Here is a 345-residue protein sequence, read N- to C-terminus: Phosphoribosylformylglycinamidine cyclo-ligase (345 aa).

This sequence belongs to the AIR synthase family.

It is found in the cytoplasm. It carries out the reaction 2-formamido-N(1)-(5-O-phospho-beta-D-ribosyl)acetamidine + ATP = 5-amino-1-(5-phospho-beta-D-ribosyl)imidazole + ADP + phosphate + H(+). It participates in purine metabolism; IMP biosynthesis via de novo pathway; 5-amino-1-(5-phospho-D-ribosyl)imidazole from N(2)-formyl-N(1)-(5-phospho-D-ribosyl)glycinamide: step 2/2. The chain is Phosphoribosylformylglycinamidine cyclo-ligase from Shewanella baltica (strain OS223).